The chain runs to 422 residues: MKVVVIGAGVVGTASAWYLAKAGHEVTVVDRREGAGLETSFANGGQISPCHAEPWANPSVLPKVLKWLGREDAPLLFRWNRWDPALWAWGLRFLANCSRSRAEINTERTLRVALYSRACLGELRAETGIAYDQQVRGILHVYRDGAEFEHACRAAEVMIRHGLRRLPRTPAECTAIEPALGAVQGELAGGIYTPDDESGDAHKFTRELAALAAAKGVEFRWNVPIQSLLADGDRVAGLATSDGTIRAESYVLAAGCDSPLLARPLGLRLPIIPAKGYSVTVPVDNHAGAPLVSITDDEHKMVYSRLGDRLRAAGTAEMAGYDRMPNPVRNRLILDNARRLFPDGGDFDRAEPWAGLRPVTPDSVPLLGATPLRNLWLNTGHGTLGWTMSCGSGRIVADLVSGRPSAISMDGLGIDRFTSYLW.

3–17 (VVVIGAGVVGTASAW) lines the FAD pocket.

The protein belongs to the DadA oxidoreductase family. The cofactor is FAD.

The catalysed reaction is a D-alpha-amino acid + A + H2O = a 2-oxocarboxylate + AH2 + NH4(+). It participates in amino-acid degradation; D-alanine degradation; NH(3) and pyruvate from D-alanine: step 1/1. Functionally, oxidative deamination of D-amino acids. The sequence is that of D-amino acid dehydrogenase from Paramagnetospirillum magneticum (strain ATCC 700264 / AMB-1) (Magnetospirillum magneticum).